The following is a 232-amino-acid chain: Orotidine 5'-phosphate decarboxylase (232 aa).

Substrate-binding positions include D13, K35, 62–71, T122, R182, Q191, G211, and R212; that span reads DLKFHDIPNT. K64 functions as the Proton donor in the catalytic mechanism.

This sequence belongs to the OMP decarboxylase family. Type 1 subfamily. Homodimer.

The catalysed reaction is orotidine 5'-phosphate + H(+) = UMP + CO2. Its pathway is pyrimidine metabolism; UMP biosynthesis via de novo pathway; UMP from orotate: step 2/2. Its function is as follows. Catalyzes the decarboxylation of orotidine 5'-monophosphate (OMP) to uridine 5'-monophosphate (UMP). This chain is Orotidine 5'-phosphate decarboxylase, found in Pseudomonas paraeruginosa (strain DSM 24068 / PA7) (Pseudomonas aeruginosa (strain PA7)).